We begin with the raw amino-acid sequence, 415 residues long: Serine hydroxymethyltransferase (415 aa).

Residues Leu-121 and 125 to 127 contribute to the (6S)-5,6,7,8-tetrahydrofolate site; that span reads GHL. Lys-230 carries the post-translational modification N6-(pyridoxal phosphate)lysine. Residues Glu-246 and 354 to 356 contribute to the (6S)-5,6,7,8-tetrahydrofolate site; that span reads SPF.

Belongs to the SHMT family. Homodimer. The cofactor is pyridoxal 5'-phosphate.

The protein resides in the cytoplasm. It carries out the reaction (6R)-5,10-methylene-5,6,7,8-tetrahydrofolate + glycine + H2O = (6S)-5,6,7,8-tetrahydrofolate + L-serine. It participates in one-carbon metabolism; tetrahydrofolate interconversion. It functions in the pathway amino-acid biosynthesis; glycine biosynthesis; glycine from L-serine: step 1/1. In terms of biological role, catalyzes the reversible interconversion of serine and glycine with tetrahydrofolate (THF) serving as the one-carbon carrier. This reaction serves as the major source of one-carbon groups required for the biosynthesis of purines, thymidylate, methionine, and other important biomolecules. Also exhibits THF-independent aldolase activity toward beta-hydroxyamino acids, producing glycine and aldehydes, via a retro-aldol mechanism. The polypeptide is Serine hydroxymethyltransferase (Bdellovibrio bacteriovorus (strain ATCC 15356 / DSM 50701 / NCIMB 9529 / HD100)).